The following is a 482-amino-acid chain: ATP synthase subunit beta, chloroplastic (482 aa).

Residue Gly-168 to Thr-175 participates in ATP binding.

Belongs to the ATPase alpha/beta chains family. F-type ATPases have 2 components, CF(1) - the catalytic core - and CF(0) - the membrane proton channel. CF(1) has five subunits: alpha(3), beta(3), gamma(1), delta(1), epsilon(1). CF(0) has four main subunits: a(1), b(1), b'(1) and c(9-12).

Its subcellular location is the plastid. It localises to the chloroplast thylakoid membrane. The enzyme catalyses ATP + H2O + 4 H(+)(in) = ADP + phosphate + 5 H(+)(out). Functionally, produces ATP from ADP in the presence of a proton gradient across the membrane. The catalytic sites are hosted primarily by the beta subunits. This is ATP synthase subunit beta, chloroplastic from Gnetum parvifolium (Small-leaved jointfir).